A 513-amino-acid chain; its full sequence is Na(+)/H(+) antiporter NhaB (513 aa).

A run of 12 helical transmembrane segments spans residues 21 to 41, 64 to 84, 88 to 108, 119 to 139, 143 to 163, 202 to 222, 243 to 263, 299 to 318, 322 to 344, 350 to 370, 389 to 409, and 477 to 497; these read ICII…SPFV, QPGG…AHHV, IMAN…IYFM, LLIV…SATF, FLDA…FYGV, LLMH…VGEP, LPVS…LEHF, MGIQ…LHLA, IIGL…HAIG, PMPF…IVDL, LALF…VFVG, and MALP…EFLL.

This sequence belongs to the NhaB Na(+)/H(+) (TC 2.A.34) antiporter family.

It is found in the cell inner membrane. The catalysed reaction is 2 Na(+)(in) + 3 H(+)(out) = 2 Na(+)(out) + 3 H(+)(in). Na(+)/H(+) antiporter that extrudes sodium in exchange for external protons. In Actinobacillus pleuropneumoniae serotype 3 (strain JL03), this protein is Na(+)/H(+) antiporter NhaB.